Reading from the N-terminus, the 238-residue chain is MAAPTQLPETAKPKHSNQSEAGPAPLASPTAPMPRPASHLAPMPSDHPDFRSKSARLRCQPPRTNNCGTFKQPPSVAATSRPKPGNPFLQPPTKGTPPPKKKKKNHTEGCHTHEANPEPNTKHTETESPKPQTSTQHHTPITIPSSLLSQNTQREKRGLPLLTSRPSTIPANTYQPQSPHIHSHTPLQRPISTALLHQNLHIRARNIRHTGRLHGSPTKGAQTAQQAQPHPPKQLATL.

Disordered regions lie at residues 1 to 154 (MAAP…NTQR) and 211 to 238 (GRLHGSPTKGAQTAQQAQPHPPKQLATL). Basic and acidic residues predominate over residues 106-128 (HTEGCHTHEANPEPNTKHTETES). Over residues 129–152 (PKPQTSTQHHTPITIPSSLLSQNT) the composition is skewed to polar residues.

The protein belongs to the UPF0328 family.

The polypeptide is UPF0328 protein ECU07_0010 (Encephalitozoon cuniculi (strain GB-M1) (Microsporidian parasite)).